Here is a 261-residue protein sequence, read N- to C-terminus: Cytochrome c oxidase subunit 3 (261 aa).

At 1–15 (MTHQTHAYHMVNPSP) the chain is on the mitochondrial matrix side. Residues 16–34 (WPLTGALSALLMTSGLIMW) form a helical membrane-spanning segment. Topologically, residues 35–40 (FHFNST) are mitochondrial intermembrane. The helical transmembrane segment at 41–66 (TLLTLGLTTNMLTMYQWWRDVIREST) threads the bilayer. The Mitochondrial matrix segment spans residues 67–72 (FQGHHT). A helical transmembrane segment spans residues 73–105 (PTVQKGLRYGMILFIISEVLFFTGFFWAFYHSS). The Mitochondrial intermembrane segment spans residues 106-128 (LAPTPELGGCWPPTGIHPLNPLE). The helical transmembrane segment at 129-152 (VPLLNTSVLLASGVSITWAHHSLM) threads the bilayer. Topologically, residues 153–155 (EGN) are mitochondrial matrix. Residues 156-183 (RNPMLQALFITIALGIYFTLLQASEYYE) form a helical membrane-spanning segment. The Mitochondrial intermembrane portion of the chain corresponds to 184 to 190 (APFTISD). The chain crosses the membrane as a helical span at residues 191–223 (GVYGSTFFVATGFHGLHVIIGSTFLIVCFFRQL). Over 224-232 (KFHFTSNHH) the chain is Mitochondrial matrix. The chain crosses the membrane as a helical span at residues 233-256 (FGFEAAAWYWHFVDVVWLFLYVSI). Over 257–261 (YWWGS) the chain is Mitochondrial intermembrane.

It belongs to the cytochrome c oxidase subunit 3 family. In terms of assembly, component of the cytochrome c oxidase (complex IV, CIV), a multisubunit enzyme composed of 14 subunits. The complex is composed of a catalytic core of 3 subunits MT-CO1, MT-CO2 and MT-CO3, encoded in the mitochondrial DNA, and 11 supernumerary subunits COX4I, COX5A, COX5B, COX6A, COX6B, COX6C, COX7A, COX7B, COX7C, COX8 and NDUFA4, which are encoded in the nuclear genome. The complex exists as a monomer or a dimer and forms supercomplexes (SCs) in the inner mitochondrial membrane with NADH-ubiquinone oxidoreductase (complex I, CI) and ubiquinol-cytochrome c oxidoreductase (cytochrome b-c1 complex, complex III, CIII), resulting in different assemblies (supercomplex SCI(1)III(2)IV(1) and megacomplex MCI(2)III(2)IV(2)).

Its subcellular location is the mitochondrion inner membrane. It carries out the reaction 4 Fe(II)-[cytochrome c] + O2 + 8 H(+)(in) = 4 Fe(III)-[cytochrome c] + 2 H2O + 4 H(+)(out). Functionally, component of the cytochrome c oxidase, the last enzyme in the mitochondrial electron transport chain which drives oxidative phosphorylation. The respiratory chain contains 3 multisubunit complexes succinate dehydrogenase (complex II, CII), ubiquinol-cytochrome c oxidoreductase (cytochrome b-c1 complex, complex III, CIII) and cytochrome c oxidase (complex IV, CIV), that cooperate to transfer electrons derived from NADH and succinate to molecular oxygen, creating an electrochemical gradient over the inner membrane that drives transmembrane transport and the ATP synthase. Cytochrome c oxidase is the component of the respiratory chain that catalyzes the reduction of oxygen to water. Electrons originating from reduced cytochrome c in the intermembrane space (IMS) are transferred via the dinuclear copper A center (CU(A)) of subunit 2 and heme A of subunit 1 to the active site in subunit 1, a binuclear center (BNC) formed by heme A3 and copper B (CU(B)). The BNC reduces molecular oxygen to 2 water molecules using 4 electrons from cytochrome c in the IMS and 4 protons from the mitochondrial matrix. The chain is Cytochrome c oxidase subunit 3 (MT-CO3) from Madoqua guentheri (Guenther's dik-dik).